Reading from the N-terminus, the 380-residue chain is tRNA-specific 2-thiouridylase MnmA (380 aa).

ATP contacts are provided by residues 14 to 21 (GLSGGVDS) and Met40. The segment at 100–102 (NPD) is interaction with target base in tRNA. Cys105 acts as the Nucleophile in catalysis. Cys105 and Cys203 are joined by a disulfide. Gly129 provides a ligand contact to ATP. The tract at residues 153–155 (KDQ) is interaction with tRNA. Residue Cys203 is the Cysteine persulfide intermediate of the active site. An interaction with tRNA region spans residues 322 to 323 (RY).

The protein belongs to the MnmA/TRMU family.

Its subcellular location is the cytoplasm. The enzyme catalyses S-sulfanyl-L-cysteinyl-[protein] + uridine(34) in tRNA + AH2 + ATP = 2-thiouridine(34) in tRNA + L-cysteinyl-[protein] + A + AMP + diphosphate + H(+). Catalyzes the 2-thiolation of uridine at the wobble position (U34) of tRNA, leading to the formation of s(2)U34. This is tRNA-specific 2-thiouridylase MnmA from Leptothrix cholodnii (strain ATCC 51168 / LMG 8142 / SP-6) (Leptothrix discophora (strain SP-6)).